The chain runs to 81 residues: ATP synthase subunit c (81 aa).

A run of 2 helical transmembrane segments spans residues 5–25 and 57–77; these read IAAG…IGAG and VGLV…FVFA.

This sequence belongs to the ATPase C chain family. F-type ATPases have 2 components, F(1) - the catalytic core - and F(0) - the membrane proton channel. F(1) has five subunits: alpha(3), beta(3), gamma(1), delta(1), epsilon(1). F(0) has three main subunits: a(1), b(2) and c(10-14). The alpha and beta chains form an alternating ring which encloses part of the gamma chain. F(1) is attached to F(0) by a central stalk formed by the gamma and epsilon chains, while a peripheral stalk is formed by the delta and b chains.

It localises to the cell membrane. Functionally, f(1)F(0) ATP synthase produces ATP from ADP in the presence of a proton or sodium gradient. F-type ATPases consist of two structural domains, F(1) containing the extramembraneous catalytic core and F(0) containing the membrane proton channel, linked together by a central stalk and a peripheral stalk. During catalysis, ATP synthesis in the catalytic domain of F(1) is coupled via a rotary mechanism of the central stalk subunits to proton translocation. In terms of biological role, key component of the F(0) channel; it plays a direct role in translocation across the membrane. A homomeric c-ring of between 10-14 subunits forms the central stalk rotor element with the F(1) delta and epsilon subunits. The protein is ATP synthase subunit c of Mycolicibacterium gilvum (strain PYR-GCK) (Mycobacterium gilvum (strain PYR-GCK)).